The following is a 261-amino-acid chain: Indole-3-glycerol phosphate synthase (261 aa).

The protein belongs to the TrpC family.

It catalyses the reaction 1-(2-carboxyphenylamino)-1-deoxy-D-ribulose 5-phosphate + H(+) = (1S,2R)-1-C-(indol-3-yl)glycerol 3-phosphate + CO2 + H2O. Its pathway is amino-acid biosynthesis; L-tryptophan biosynthesis; L-tryptophan from chorismate: step 4/5. The sequence is that of Indole-3-glycerol phosphate synthase from Burkholderia ambifaria (strain ATCC BAA-244 / DSM 16087 / CCUG 44356 / LMG 19182 / AMMD) (Burkholderia cepacia (strain AMMD)).